A 407-amino-acid chain; its full sequence is Na(+)-translocating NADH-quinone reductase subunit F (407 aa).

A helical transmembrane segment spans residues 3 to 23 (ITLGIAMFTVIVLALAVIILF). One can recognise a 2Fe-2S ferredoxin-type domain in the interval 32–126 (GDITIEINDD…SMKVELPEEV (95 aa)). The [2Fe-2S] cluster site is built by cysteine 69, cysteine 75, cysteine 78, and cysteine 110. Positions 129–269 (VKKWECTVIS…SGPFGEFFAK (141 aa)) constitute an FAD-binding FR-type domain. The catalytic stretch occupies residues 272–389 (DAEMVFVGGG…PIMNASVIKM (118 aa)).

Belongs to the NqrF family. As to quaternary structure, composed of six subunits; NqrA, NqrB, NqrC, NqrD, NqrE and NqrF. It depends on [2Fe-2S] cluster as a cofactor. FAD serves as cofactor.

It is found in the cell inner membrane. The enzyme catalyses a ubiquinone + n Na(+)(in) + NADH + H(+) = a ubiquinol + n Na(+)(out) + NAD(+). Functionally, NQR complex catalyzes the reduction of ubiquinone-1 to ubiquinol by two successive reactions, coupled with the transport of Na(+) ions from the cytoplasm to the periplasm. The first step is catalyzed by NqrF, which accepts electrons from NADH and reduces ubiquinone-1 to ubisemiquinone by a one-electron transfer pathway. In Pasteurella multocida (strain Pm70), this protein is Na(+)-translocating NADH-quinone reductase subunit F.